The following is a 460-amino-acid chain: Putative arginine/ornithine antiporter (460 aa).

Over 1 to 4 (MEKK) the chain is Cytoplasmic. A helical membrane pass occupies residues 5–25 (LGLSALTALVLSSMLGAGVFS). The Periplasmic portion of the chain corresponds to 26–38 (LPQNMAAVASPAA). The chain crosses the membrane as a helical span at residues 39-59 (LLIGWGITGAGILLLAFAMLI). Residues 60-92 (LTRIRPELDGGIFTYAREGFGELIGFCSAWGYW) lie on the Cytoplasmic side of the membrane. Residues 93-113 (LCAVIANVSYLVIVFSALSFF) form a helical membrane-spanning segment. At 114–125 (TDTPELRLFGDG) the chain is on the periplasmic side. Residues 126 to 146 (NTWQSIVGASALLWIVHFLIL) traverse the membrane as a helical segment. Residues 147-157 (RGVQTAASINL) lie on the Cytoplasmic side of the membrane. The helical transmembrane segment at 158–178 (VATLAKLLPLGLFVVLAMMMF) threads the bilayer. The Periplasmic portion of the chain corresponds to 179 to 201 (KLDTFKLDFTGLALGVPVWEQVK). A helical membrane pass occupies residues 202 to 222 (NTMLITLWVFIGVEGAVVVSA). Residues 223–235 (RARNKRDVGKATL) lie on the Cytoplasmic side of the membrane. Residues 236 to 256 (LAVLSALGVYLLVTLLSLGVV) form a helical membrane-spanning segment. The Periplasmic portion of the chain corresponds to 257-282 (ARPELAEIRNPSMAGLMVEMMGPWGE). The helical transmembrane segment at 283–303 (IIIAAGLIVSVCGAYLSWTIM) threads the bilayer. The Cytoplasmic portion of the chain corresponds to 304-331 (AAEVPFLAATHKAFPRIFARQNAQAAPS). A helical membrane pass occupies residues 332 to 352 (ASLWLTNICVQICLVLIWLTG). At 353–357 (SDYNT) the chain is on the periplasmic side. The chain crosses the membrane as a helical span at residues 358–378 (LLTIASEMILVPYFLVGAFLL). Topologically, residues 379 to 384 (KIATRP) are cytoplasmic. Transmembrane regions (helical) follow at residues 385 to 405 (LHKA…YASG) and 406 to 426 (PMHL…FLYA). Residues 427–439 (RKTHTHDNVLNRQ) lie on the Cytoplasmic side of the membrane. The chain crosses the membrane as a helical span at residues 440–460 (EMVLIGMLLIASVPATWMLVG).

The protein belongs to the amino acid-polyamine-organocation (APC) superfamily. Basic amino acid/polyamine antiporter (APA) (TC 2.A.3.2) family.

It localises to the cell inner membrane. It catalyses the reaction L-ornithine(in) + L-arginine(out) = L-ornithine(out) + L-arginine(in). Functionally, catalyzes electroneutral exchange between arginine and ornithine to allow high-efficiency energy conversion in the arginine deiminase pathway. This chain is Putative arginine/ornithine antiporter (ydgI), found in Escherichia coli O6:H1 (strain CFT073 / ATCC 700928 / UPEC).